The following is a 166-amino-acid chain: Large ribosomal subunit protein uL10 (166 aa).

The protein belongs to the universal ribosomal protein uL10 family. In terms of assembly, part of the ribosomal stalk of the 50S ribosomal subunit. The N-terminus interacts with L11 and the large rRNA to form the base of the stalk. The C-terminus forms an elongated spine to which L12 dimers bind in a sequential fashion forming a multimeric L10(L12)X complex.

Forms part of the ribosomal stalk, playing a central role in the interaction of the ribosome with GTP-bound translation factors. The protein is Large ribosomal subunit protein uL10 of Enterococcus faecalis (strain ATCC 700802 / V583).